Consider the following 125-residue polypeptide: Holo-[acyl-carrier-protein] synthase (125 aa).

Aspartate 8 and glutamate 57 together coordinate Mg(2+).

It belongs to the P-Pant transferase superfamily. AcpS family. Mg(2+) is required as a cofactor.

It is found in the cytoplasm. It catalyses the reaction apo-[ACP] + CoA = holo-[ACP] + adenosine 3',5'-bisphosphate + H(+). Functionally, transfers the 4'-phosphopantetheine moiety from coenzyme A to a Ser of acyl-carrier-protein. This chain is Holo-[acyl-carrier-protein] synthase, found in Nitrosospira multiformis (strain ATCC 25196 / NCIMB 11849 / C 71).